We begin with the raw amino-acid sequence, 183 residues long: Mitochondrial inner membrane protease subunit 2 (183 aa).

A helical membrane pass occupies residues 13-35 (AFVSGFFVAVPVTVTVLDRLAYV). Catalysis depends on residues serine 42 and lysine 90. Residues 161–183 (SVPPDRRPLLNWDRAAEDKYDDD) are disordered. Basic and acidic residues predominate over residues 164–183 (PDRRPLLNWDRAAEDKYDDD).

Belongs to the peptidase S26 family. IMP2 subfamily. Heterodimer of 2 subunits, IMMPL1 and IMMPL2.

The protein localises to the mitochondrion inner membrane. Catalyzes the removal of transit peptides required for the targeting of proteins from the mitochondrial matrix, across the inner membrane, into the inter-membrane space. The chain is Mitochondrial inner membrane protease subunit 2 (immp2l) from Danio rerio (Zebrafish).